A 141-amino-acid polypeptide reads, in one-letter code: Terrelysin (141 aa).

This sequence belongs to the aegerolysin family.

Its subcellular location is the cytoplasm. Functionally, hemolysins are potential virulence factors. Has hemolytic activity against sheep erythrocytes in vitro. This chain is Terrelysin, found in Aspergillus terreus (strain NIH 2624 / FGSC A1156).